The chain runs to 286 residues: Translocon-associated protein subunit alpha (286 aa).

Positions Met-1–Leu-21 are cleaved as a signal peptide. Residues Arg-22 to Thr-207 are Lumenal-facing. Over residues Ile-46–Ser-75 the composition is skewed to acidic residues. Residues Ile-46–Ala-83 are disordered. N-linked (GlcNAc...) asparagine glycans are attached at residues Asn-136 and Asn-191. Residues Ile-208–Leu-228 form a helical membrane-spanning segment. The Cytoplasmic segment spans residues Leu-229–Glu-286. Residues Arg-236–Glu-286 are disordered. A compositionally biased stretch (polar residues) spans Gly-244 to Lys-266. At Ser-247 the chain carries Phosphoserine. Residue Thr-260 is modified to Phosphothreonine. The residue at position 268 (Ser-268) is a Phosphoserine. The span at Ser-268–Lys-279 shows a compositional bias: basic residues.

It belongs to the TRAP-alpha family. As to quaternary structure, heterotetramer of TRAP-alpha, TRAP-beta, TRAP-delta and TRAP-gamma. Interacts with palmitoylated calnexin (CALX), the interaction is required for efficient folding of glycosylated proteins.

Its subcellular location is the endoplasmic reticulum membrane. Its function is as follows. TRAP proteins are part of a complex whose function is to bind calcium to the ER membrane and thereby regulate the retention of ER resident proteins. May be involved in the recycling of the translocation apparatus after completion of the translocation process or may function as a membrane-bound chaperone facilitating folding of translocated proteins. In Mus musculus (Mouse), this protein is Translocon-associated protein subunit alpha (Ssr1).